The sequence spans 536 residues: 3',5'-cyclic-AMP phosphodiesterase 4C (536 aa).

The segment at 49 to 69 (QALLGTPPQSSQQAAPAEESG) is disordered. In terms of domain architecture, PDEase spans 178 to 507 (VQTDQEEQLA…EWYQSRVPCS (330 aa)). His-254 acts as the Proton donor in catalysis. His-254 lines the 3',5'-cyclic AMP pocket. 2 residues coordinate AMP: His-254 and His-258. 4 residues coordinate Zn(2+): His-258, His-294, Asp-295, and Asp-412. 4 residues coordinate AMP: Asp-295, Asp-412, Gln-463, and Phe-466. Asp-295 contributes to the Mg(2+) binding site. A Mn(2+)-binding site is contributed by Asp-295. 3',5'-cyclic AMP contacts are provided by Gln-463 and Phe-466. Residue Ser-507 is modified to Phosphoserine.

The protein belongs to the cyclic nucleotide phosphodiesterase family. PDE4 subfamily. As to quaternary structure, part of a complex containing AKAP5, ADCY5, ADCY6 and PKD2. Zn(2+) is required as a cofactor. Mg(2+) serves as cofactor. Requires Mn(2+) as cofactor.

Its subcellular location is the cell projection. It localises to the cilium. The enzyme catalyses 3',5'-cyclic AMP + H2O = AMP + H(+). It functions in the pathway purine metabolism; 3',5'-cyclic AMP degradation; AMP from 3',5'-cyclic AMP: step 1/1. Functionally, hydrolyzes the second messenger cAMP, which is a key regulator of many important physiological processes. In Rattus norvegicus (Rat), this protein is 3',5'-cyclic-AMP phosphodiesterase 4C.